We begin with the raw amino-acid sequence, 149 residues long: uncharacterized protein (149 aa).

At S21 the chain carries Phosphoserine. 2 helical membrane passes run 48–68 and 72–92; these read FMEF…WVLG and VLAA…FQLV. The interval 116-149 is disordered; that stretch reads AEEVPPPSYPSLEEENEGNEEIEESEEMNTLLSK. Residues 127–142 are compositionally biased toward acidic residues; that stretch reads LEEENEGNEEIEESEE.

It is found in the membrane. This is an uncharacterized protein from Schizosaccharomyces pombe (strain 972 / ATCC 24843) (Fission yeast).